Reading from the N-terminus, the 318-residue chain is Tyrosine--tRNA ligase (318 aa).

L-tyrosine is bound at residue tyrosine 35. The 'HIGH' region signature appears at 40-48; sequence PSGKVHLGH. 4 residues coordinate L-tyrosine: tyrosine 154, glutamine 158, aspartate 161, and glutamine 176. The 'KMSKS' region signature appears at 211-215; the sequence is KMSSS. Position 214 (serine 214) interacts with ATP.

This sequence belongs to the class-I aminoacyl-tRNA synthetase family. TyrS type 3 subfamily. In terms of assembly, homodimer.

Its subcellular location is the cytoplasm. The enzyme catalyses tRNA(Tyr) + L-tyrosine + ATP = L-tyrosyl-tRNA(Tyr) + AMP + diphosphate + H(+). Catalyzes the attachment of tyrosine to tRNA(Tyr) in a two-step reaction: tyrosine is first activated by ATP to form Tyr-AMP and then transferred to the acceptor end of tRNA(Tyr). In Methanosphaera stadtmanae (strain ATCC 43021 / DSM 3091 / JCM 11832 / MCB-3), this protein is Tyrosine--tRNA ligase.